The primary structure comprises 232 residues: Large ribosomal subunit protein uL1 (232 aa).

Belongs to the universal ribosomal protein uL1 family. As to quaternary structure, part of the 50S ribosomal subunit.

Its function is as follows. Binds directly to 23S rRNA. The L1 stalk is quite mobile in the ribosome, and is involved in E site tRNA release. Protein L1 is also a translational repressor protein, it controls the translation of the L11 operon by binding to its mRNA. The polypeptide is Large ribosomal subunit protein uL1 (Cereibacter sphaeroides (strain ATCC 17025 / ATH 2.4.3) (Rhodobacter sphaeroides)).